A 393-amino-acid chain; its full sequence is UPF0496 protein At2g18630 (393 aa).

Positions 1-20 (MMGGKSSKSKKNVEFGSPST) are disordered. A coiled-coil region spans residues 149 to 222 (VNQFEEENED…RLRNIKTWRR (74 aa)). 2 helical membrane-spanning segments follow: residues 226–246 (MVFV…AAVA) and 249–269 (PVVA…GKWC). The stretch at 299–356 (KEMDNISILVRKVEVEIESLLKKAEFAITEEKEVRLAIDEIKKKLDVFTETIEELGEH) forms a coiled coil.

The protein belongs to the UPF0496 family.

It is found in the membrane. The polypeptide is UPF0496 protein At2g18630 (Arabidopsis thaliana (Mouse-ear cress)).